The chain runs to 354 residues: Neuronal growth regulator 1 (354 aa).

A signal peptide spans 1 to 37; it reads MDMMLLVQGACCSNQWLAAVLLSLCCLLPSCLPAGQS. 3 Ig-like C2-type domains span residues 38–134, 139–221, and 225–313; these read VDFP…VHLT, PKIY…KVVV, and PTIQ…LPLN. The cysteines at positions 60 and 118 are disulfide-linked. Residues N73 and N155 are each glycosylated (N-linked (GlcNAc...) asparagine). 2 cysteine pairs are disulfide-bonded: C160–C203 and C245–C297. Y187 is modified (phosphotyrosine). Residues N275, N286, N294, and N307 are each glycosylated (N-linked (GlcNAc...) asparagine). G324 carries the GPI-anchor amidated glycine lipid modification. Positions 325–354 are cleaved as a propeptide — removed in mature form; the sequence is SADVLFSCWYLVLTLSSFTSIFYLKNAILQ.

This sequence belongs to the immunoglobulin superfamily. IgLON family.

Its subcellular location is the cell membrane. May be involved in cell-adhesion. May function as a trans-neural growth-promoting factor in regenerative axon sprouting in the mammalian brain. The protein is Neuronal growth regulator 1 (NEGR1) of Pongo abelii (Sumatran orangutan).